We begin with the raw amino-acid sequence, 313 residues long: Protein FixB (313 aa).

255–283 (LYLAVGISGQIQHMVGANASQTIFAINKD) is a binding site for FAD.

Belongs to the ETF alpha-subunit/FixB family. Heterodimer of FixA and FixB.

The protein operates within amine and polyamine metabolism; carnitine metabolism. Required for anaerobic carnitine reduction. May bring reductant to CaiA. The polypeptide is Protein FixB (Escherichia coli O8 (strain IAI1)).